The sequence spans 729 residues: Zorya protein ZorA (729 aa).

The next 3 membrane-spanning stretches (helical) occupy residues 20-40, 135-155, and 177-197; these read PATV…FYFF, LPGI…MIGL, and VLYA…ITWL.

The protein belongs to the MotA family.

The protein localises to the cell inner membrane. Its function is as follows. Component of antiviral defense system Zorya type I, composed of ZorA, ZorB, ZorC and ZorD. Expression of Zorya type I in E.coli (strain MG1655) confers 10,000-fold resistance to phage SECphi27, 100-fold resistance to lambda, and 10-fold resistance to T7. While most T7 infected Zorya-containing cells undergo abortive infection, a minority produce viable phage progeny. These eventually accumulate to a high multiplicity of infection, leading to culture collapse by 2 hours after initial infection. ZorA and ZorB probably assemble in the cell inner membrane and exert their effect there. This Escherichia coli O139:H28 (strain E24377A / ETEC) protein is Zorya protein ZorA.